A 300-amino-acid polypeptide reads, in one-letter code: Geranyl diphosphate 2-C-methyltransferase (300 aa).

The tract at residues 1–24 is disordered; sequence MAAASAPVPGPGGASSTARGRIPA.

This sequence belongs to the geranyl diphosphate 2-C-methyltransferase family. The cofactor is Mg(2+).

It catalyses the reaction (2E)-geranyl diphosphate + S-adenosyl-L-methionine = (E)-2-methylgeranyl diphosphate + S-adenosyl-L-homocysteine + H(+). In terms of biological role, catalyzes the SAM-dependent methylation of geranyl diphosphate (GPP) to yield (E)-2-methylgeranyl diphosphate (2-MeGPP). The polypeptide is Geranyl diphosphate 2-C-methyltransferase (gdpmt) (Streptomyces lasalocidi (Streptomyces lasaliensis)).